A 506-amino-acid chain; its full sequence is Anaerobic nitric oxide reductase transcription regulator NorR (506 aa).

The residue at position 57 (Asp-57) is a 4-aspartylphosphate. The Sigma-54 factor interaction domain maps to 187–416 (MIGLSPAMTQ…LEHAIHRAVV (230 aa)). ATP is bound by residues 215 to 222 (GETGTGKE) and 278 to 287 (ADNGTLFLDE). The H-T-H motif DNA-binding region spans 481 to 500 (WAASARALETDVANLHRLAK).

It participates in nitrogen metabolism; nitric oxide reduction. Its function is as follows. Required for the expression of anaerobic nitric oxide (NO) reductase, acts as a transcriptional activator for at least the norVW operon. Activation also requires sigma-54. This chain is Anaerobic nitric oxide reductase transcription regulator NorR, found in Salmonella paratyphi A (strain ATCC 9150 / SARB42).